We begin with the raw amino-acid sequence, 819 residues long: Leucine--tRNA ligase (819 aa).

The 'HIGH' region signature appears at 42–52 (PYPSGRLHMGH). Residues 577–581 (KMSKS) carry the 'KMSKS' region motif. Position 580 (Lys580) interacts with ATP.

It belongs to the class-I aminoacyl-tRNA synthetase family.

It is found in the cytoplasm. The enzyme catalyses tRNA(Leu) + L-leucine + ATP = L-leucyl-tRNA(Leu) + AMP + diphosphate. This chain is Leucine--tRNA ligase, found in Saccharophagus degradans (strain 2-40 / ATCC 43961 / DSM 17024).